The sequence spans 407 residues: Probable tRNA sulfurtransferase (407 aa).

The THUMP domain occupies 61 to 165 (NEITYRLSKI…LDAIYMYEEV (105 aa)). ATP contacts are provided by residues 183–184 (ML), 208–209 (HF), arginine 265, glycine 287, and glutamine 296.

It belongs to the ThiI family.

Its subcellular location is the cytoplasm. The enzyme catalyses [ThiI sulfur-carrier protein]-S-sulfanyl-L-cysteine + a uridine in tRNA + 2 reduced [2Fe-2S]-[ferredoxin] + ATP + H(+) = [ThiI sulfur-carrier protein]-L-cysteine + a 4-thiouridine in tRNA + 2 oxidized [2Fe-2S]-[ferredoxin] + AMP + diphosphate. It carries out the reaction [ThiS sulfur-carrier protein]-C-terminal Gly-Gly-AMP + S-sulfanyl-L-cysteinyl-[cysteine desulfurase] + AH2 = [ThiS sulfur-carrier protein]-C-terminal-Gly-aminoethanethioate + L-cysteinyl-[cysteine desulfurase] + A + AMP + 2 H(+). It participates in cofactor biosynthesis; thiamine diphosphate biosynthesis. In terms of biological role, catalyzes the ATP-dependent transfer of a sulfur to tRNA to produce 4-thiouridine in position 8 of tRNAs, which functions as a near-UV photosensor. Also catalyzes the transfer of sulfur to the sulfur carrier protein ThiS, forming ThiS-thiocarboxylate. This is a step in the synthesis of thiazole, in the thiamine biosynthesis pathway. The sulfur is donated as persulfide by IscS. This chain is Probable tRNA sulfurtransferase, found in Staphylococcus aureus (strain bovine RF122 / ET3-1).